The sequence spans 1376 residues: Major capsid protein (1376 aa).

Belongs to the herpesviridae major capsid protein family. In terms of assembly, homomultimer. Makes the hexons and eleven out of twelve pentons. Interacts with triplex proteins 1/TRX1 and 2/TRX2; adjacent capsomers are linked together in groups of three by triplexes, heterotrimeric complexes composed of one molecule of TRX1 and two molecules of TRX2. Interacts with scaffold protein; this interaction allows efficient MCP transport to the host nucleus. Interacts with capsid vertex component 2/CVC2. Interacts with the small capsomere-interacting protein/SCP.

It is found in the virion. The protein localises to the host nucleus. Self-assembles to form an icosahedral capsid with a T=16 symmetry, about 200 nm in diameter, and consisting of 150 hexons and 12 pentons (total of 162 capsomers). Hexons form the edges and faces of the capsid and are each composed of six MCP molecules. In contrast, one penton is found at each of the 12 vertices. Eleven of the pentons are MCP pentamers, while the last vertex is occupied by the portal complex. The capsid is surrounded by a layer of proteinaceous material designated the tegument which, in turn, is enclosed in an envelope of host cell-derived lipids containing virus-encoded glycoproteins. The polypeptide is Major capsid protein (Human herpesvirus 8 type P (isolate GK18) (HHV-8)).